Consider the following 97-residue polypeptide: Small ribosomal subunit protein bS20 (97 aa).

Belongs to the bacterial ribosomal protein bS20 family.

Its function is as follows. Binds directly to 16S ribosomal RNA. The protein is Small ribosomal subunit protein bS20 of Prochlorococcus marinus (strain MIT 9312).